The primary structure comprises 483 residues: Glutamyl-tRNA(Gln) amidotransferase subunit A (483 aa).

Active-site charge relay system residues include lysine 76 and serine 151. The active-site Acyl-ester intermediate is the serine 175.

It belongs to the amidase family. GatA subfamily. In terms of assembly, heterotrimer of A, B and C subunits.

The enzyme catalyses L-glutamyl-tRNA(Gln) + L-glutamine + ATP + H2O = L-glutaminyl-tRNA(Gln) + L-glutamate + ADP + phosphate + H(+). Allows the formation of correctly charged Gln-tRNA(Gln) through the transamidation of misacylated Glu-tRNA(Gln) in organisms which lack glutaminyl-tRNA synthetase. The reaction takes place in the presence of glutamine and ATP through an activated gamma-phospho-Glu-tRNA(Gln). The protein is Glutamyl-tRNA(Gln) amidotransferase subunit A of Pseudomonas fluorescens (strain ATCC BAA-477 / NRRL B-23932 / Pf-5).